The chain runs to 670 residues: DNA ligase (670 aa).

NAD(+) contacts are provided by residues D31–D35, S76–L77, and E108. K110 serves as the catalytic N6-AMP-lysine intermediate. NAD(+) is bound by residues R131, E166, K271, and K295. Zn(2+) is bound by residues C388, C391, C406, and C412. The region spanning N579 to S668 is the BRCT domain.

Belongs to the NAD-dependent DNA ligase family. LigA subfamily. Mg(2+) is required as a cofactor. It depends on Mn(2+) as a cofactor.

It carries out the reaction NAD(+) + (deoxyribonucleotide)n-3'-hydroxyl + 5'-phospho-(deoxyribonucleotide)m = (deoxyribonucleotide)n+m + AMP + beta-nicotinamide D-nucleotide.. Its function is as follows. DNA ligase that catalyzes the formation of phosphodiester linkages between 5'-phosphoryl and 3'-hydroxyl groups in double-stranded DNA using NAD as a coenzyme and as the energy source for the reaction. It is essential for DNA replication and repair of damaged DNA. The sequence is that of DNA ligase from Neorickettsia sennetsu (strain ATCC VR-367 / Miyayama) (Ehrlichia sennetsu).